A 362-amino-acid chain; its full sequence is 3-isopropylmalate dehydrogenase (362 aa).

G78–E91 lines the NAD(+) pocket. Positions 99, 109, 138, and 227 each coordinate substrate. Positions 227, 251, and 255 each coordinate Mg(2+). G285–N297 serves as a coordination point for NAD(+).

This sequence belongs to the isocitrate and isopropylmalate dehydrogenases family. LeuB type 1 subfamily. Homodimer. Mg(2+) is required as a cofactor. It depends on Mn(2+) as a cofactor.

It localises to the cytoplasm. It carries out the reaction (2R,3S)-3-isopropylmalate + NAD(+) = 4-methyl-2-oxopentanoate + CO2 + NADH. It functions in the pathway amino-acid biosynthesis; L-leucine biosynthesis; L-leucine from 3-methyl-2-oxobutanoate: step 3/4. Catalyzes the oxidation of 3-carboxy-2-hydroxy-4-methylpentanoate (3-isopropylmalate) to 3-carboxy-4-methyl-2-oxopentanoate. The product decarboxylates to 4-methyl-2 oxopentanoate. The protein is 3-isopropylmalate dehydrogenase of Photobacterium profundum (strain SS9).